The sequence spans 143 residues: 5-hydroxymethyl-dUMP N-hydrolase (143 aa).

Residues Gly7, Ile9, Arg10, Gly11, Ser77, Gly79, Glu83, and Ser107 each contribute to the 5-hydroxymethyl-dUMP site.

Belongs to the 2'-deoxynucleoside 5'-phosphate N-hydrolase 1 family. As to quaternary structure, monomer and homodimer.

The protein localises to the cytoplasm. Its subcellular location is the nucleus. The catalysed reaction is 5-hydroxymethyl-dUMP + H2O = 5-hydroxymethyluracil + 2-deoxy-D-ribose 5-phosphate. Its function is as follows. Part of a nucleotide salvage pathway that eliminates epigenetically modified 5-hydroxymethyl-dCMP (hmdCMP) in a two-step process entailing deamination to cytotoxic 5-hydroxymethyl-dUMP (hmdUMP), followed by its hydrolysis into 5-hydroxymethyluracil (hmU) and 2-deoxy-D-ribose 5-phosphate (deoxyribosephosphate). This chain is 5-hydroxymethyl-dUMP N-hydrolase (dnph1), found in Danio rerio (Zebrafish).